A 154-amino-acid chain; its full sequence is Melatonin receptor type 1A (154 aa).

The Cytoplasmic segment spans residues 1 to 19 (YCYICHSLKYDRWYSNRNS). Residues 20 to 40 (LCCVFLICVLTLVAIVPNLCM) traverse the membrane as a helical segment. At 41–62 (GTLQYDPRIYSCTFAQSVSSAY) the chain is on the extracellular side. Residues 63 to 83 (TIAVVVFHFLVPMVIVIFRYL) form a helical membrane-spanning segment. The Cytoplasmic segment spans residues 84–115 (RIWVLVLQIRWRAKPENNPRLKPQDFRNFVTM). The chain crosses the membrane as a helical span at residues 116 to 136 (FVVFVLFAICWAPLNFIGLAV). The Extracellular segment spans residues 137–149 (ASDPASMAPRIPE).

The protein belongs to the G-protein coupled receptor 1 family.

It localises to the cell membrane. In terms of biological role, high affinity receptor for melatonin. Likely to mediate the reproductive and circadian actions of melatonin. The activity of this receptor is mediated by pertussis toxin sensitive G proteins that inhibit adenylate cyclase activity. The chain is Melatonin receptor type 1A (MTNR1A) from Sus scrofa (Pig).